The chain runs to 683 residues: DNA polymerase alpha-associated DNA helicase A (683 aa).

229-236 (GPPGTGKT) contributes to the ATP binding site.

Belongs to the DNA2/NAM7 helicase family. In terms of assembly, associates with the hexameric DNA polymerase alpha.

It is found in the cytoplasm. The protein localises to the nucleus. It catalyses the reaction ATP + H2O = ADP + phosphate + H(+). In terms of biological role, DNA polymerase alpha-associated DNA helicase which may be involved in DNA replication. The sequence is that of DNA polymerase alpha-associated DNA helicase A (HCS1) from Saccharomyces cerevisiae (strain ATCC 204508 / S288c) (Baker's yeast).